The following is a 296-amino-acid chain: Ribosomal RNA small subunit methyltransferase A (296 aa).

Positions 40, 42, 67, 88, 118, and 137 each coordinate S-adenosyl-L-methionine.

It belongs to the class I-like SAM-binding methyltransferase superfamily. rRNA adenine N(6)-methyltransferase family. RsmA subfamily.

It is found in the cytoplasm. It catalyses the reaction adenosine(1518)/adenosine(1519) in 16S rRNA + 4 S-adenosyl-L-methionine = N(6)-dimethyladenosine(1518)/N(6)-dimethyladenosine(1519) in 16S rRNA + 4 S-adenosyl-L-homocysteine + 4 H(+). Specifically dimethylates two adjacent adenosines (A1518 and A1519) in the loop of a conserved hairpin near the 3'-end of 16S rRNA in the 30S particle. May play a critical role in biogenesis of 30S subunits. This is Ribosomal RNA small subunit methyltransferase A from Rhodococcus opacus (strain B4).